Here is a 122-residue protein sequence, read N- to C-terminus: Large ribosomal subunit protein bL17 (122 aa).

Belongs to the bacterial ribosomal protein bL17 family. In terms of assembly, part of the 50S ribosomal subunit. Contacts protein L32.

The sequence is that of Large ribosomal subunit protein bL17 from Neisseria meningitidis serogroup B (strain ATCC BAA-335 / MC58).